A 448-amino-acid polypeptide reads, in one-letter code: N-succinylarginine dihydrolase (448 aa).

Residues 20–29 (AGLLFGNEAS), N111, and 138–139 (HR) contribute to the substrate site. E175 is an active-site residue. R213 is a substrate binding site. Residue H249 is part of the active site. D251 and N360 together coordinate substrate. The active-site Nucleophile is C366.

The protein belongs to the succinylarginine dihydrolase family. Homodimer.

The catalysed reaction is N(2)-succinyl-L-arginine + 2 H2O + 2 H(+) = N(2)-succinyl-L-ornithine + 2 NH4(+) + CO2. The protein operates within amino-acid degradation; L-arginine degradation via AST pathway; L-glutamate and succinate from L-arginine: step 2/5. Its function is as follows. Catalyzes the hydrolysis of N(2)-succinylarginine into N(2)-succinylornithine, ammonia and CO(2). This Shigella dysenteriae serotype 1 (strain Sd197) protein is N-succinylarginine dihydrolase.